The following is a 244-amino-acid chain: MKERRASQKLSSKSIMDPNQNVKCKIVVVGDSQCGKTALLHVFAKDCFPENYVPTVFENYTASFEIDTQRIELSLWDTSGSPYYDNVRPLSYPDSDAVLICFDISRPETLDSVLKKWKGEIQEFCPNTKMLLVGCKSDLRTDVSTLVELSNHRQTPVSYDQGANMAKQIGAATYIECSALQSENSVRDIFHVATLACVNKTNKNVKRNKSQRATKRISHMPSRPELSAVATDLRKDKAKSCTVM.

Gly-30–Thr-37 is a binding site for GTP. The Effector region signature appears at Tyr-52–Tyr-60. GTP-binding positions include Asp-77 to Ser-81 and Cys-135 to Asp-138. Cys-241 carries the post-translational modification Cysteine methyl ester. Cys-241 carries S-farnesyl cysteine lipidation. The propeptide at Thr-242–Met-244 is removed in mature form.

It belongs to the small GTPase superfamily. Rho family. Binds ROCK1. Interacts with UBXD5. Ubiquitous.

The protein resides in the golgi apparatus membrane. Binds GTP but lacks intrinsic GTPase activity and is resistant to Rho-specific GTPase-activating proteins. The protein is Rho-related GTP-binding protein RhoE (RND3) of Homo sapiens (Human).